The chain runs to 727 residues: NADH-ubiquinone oxidoreductase 75 kDa subunit, mitochondrial (727 aa).

Residues 1–23 (MLRIPVRKALVGLSKSSKGCVRT) constitute a mitochondrion transit peptide. Positions 30–108 (NLIEVFVDGQ…GWNILTNSEK (79 aa)) constitute a 2Fe-2S ferredoxin-type domain. [2Fe-2S] cluster contacts are provided by Cys-64, Cys-75, and Cys-78. Lys-84 carries the post-translational modification N6-acetyllysine. Residue Cys-92 participates in [2Fe-2S] cluster binding. Positions 108–147 (KTKKAREGVMEFLLANHPLDCPICDQGGECDLQDQSMMFG) constitute a 4Fe-4S His(Cys)3-ligated-type domain. [4Fe-4S] cluster contacts are provided by His-124, Cys-128, Cys-131, Cys-137, Cys-176, Cys-179, Cys-182, and Cys-226. One can recognise a 4Fe-4S Mo/W bis-MGD-type domain in the interval 245–301 (TRKTESIDVMDAVGSNIVVSTRTGEVMRILPRMHEDINEEWISDKTRFAYDGLKRQR). An N6-acetyllysine mark is found at Lys-499 and Lys-709.

Belongs to the complex I 75 kDa subunit family. In terms of assembly, core subunit of respiratory chain NADH dehydrogenase (Complex I) which is composed of 45 different subunits. This is the largest subunit of complex I and it is a component of the iron-sulfur (IP) fragment of the enzyme. Complex I associates with ubiquinol-cytochrome reductase complex (Complex III) to form supercomplexes. Interacts with MDM2 and AKAP1. Requires [2Fe-2S] cluster as cofactor. The cofactor is [4Fe-4S] cluster.

The protein localises to the mitochondrion inner membrane. The enzyme catalyses a ubiquinone + NADH + 5 H(+)(in) = a ubiquinol + NAD(+) + 4 H(+)(out). Functionally, core subunit of the mitochondrial membrane respiratory chain NADH dehydrogenase (Complex I) which catalyzes electron transfer from NADH through the respiratory chain, using ubiquinone as an electron acceptor. Essential for catalysing the entry and efficient transfer of electrons within complex I. Plays a key role in the assembly and stability of complex I and participates in the association of complex I with ubiquinol-cytochrome reductase complex (Complex III) to form supercomplexes. The chain is NADH-ubiquinone oxidoreductase 75 kDa subunit, mitochondrial (NDUFS1) from Bos taurus (Bovine).